We begin with the raw amino-acid sequence, 234 residues long: MEGGAYGAGKAGGAFDPYALVRQPHTILRVVSWLFSIVVFGSIVNEGYLNSASEGEEFCIYNRNPNACSYGVAVGVLAFLTCLLYLALDVYFPQISSVKDRKKAVLSDIGVSAFWAFLWFVGFCYLANQWQVSKPKDNPLNEGTDAARAAIAFSFFSIFTWAGQAVLAFQRYQIGADSALFSQDYMDPSQDSSMPYAPYVEPSTGPDPAGMGGTYQQPANTFDTEPQGYQSQGY.

Methionine 1 is modified (N-acetylmethionine). Residues 1-23 (MEGGAYGAGKAGGAFDPYALVRQ) are Cytoplasmic-facing. The 154-residue stretch at 20-173 (LVRQPHTILR…QAVLAFQRYQ (154 aa)) folds into the MARVEL domain. The chain crosses the membrane as a helical span at residues 24-44 (PHTILRVVSWLFSIVVFGSIV). Residues 45–71 (NEGYLNSASEGEEFCIYNRNPNACSYG) are Lumenal-facing. The helical transmembrane segment at 72–92 (VAVGVLAFLTCLLYLALDVYF) threads the bilayer. The Cytoplasmic portion of the chain corresponds to 93-103 (PQISSVKDRKK). Residues 104–124 (AVLSDIGVSAFWAFLWFVGFC) form a helical membrane-spanning segment. Residues 125-148 (YLANQWQVSKPKDNPLNEGTDAAR) lie on the Lumenal side of the membrane. A helical membrane pass occupies residues 149 to 169 (AAIAFSFFSIFTWAGQAVLAF). The Cytoplasmic segment spans residues 170 to 234 (QRYQIGADSA…EPQGYQSQGY (65 aa)). The interval 192–234 (SSMPYAPYVEPSTGPDPAGMGGTYQQPANTFDTEPQGYQSQGY) is disordered. The span at 214–234 (TYQQPANTFDTEPQGYQSQGY) shows a compositional bias: polar residues.

Belongs to the synaptogyrin family.

Its subcellular location is the cytoplasmic vesicle. The protein localises to the secretory vesicle. It is found in the synaptic vesicle membrane. The protein resides in the melanosome. Functionally, may play a role in regulated exocytosis. Modulates the localization of synaptophysin/SYP into synaptic-like microvesicles and may therefore play a role in synaptic-like microvesicle formation and/or maturation. Involved in the regulation of short-term and long-term synaptic plasticity. This Pongo abelii (Sumatran orangutan) protein is Synaptogyrin-1.